Here is a 1013-residue protein sequence, read N- to C-terminus: Probable ubiquitination network signaling protein acrB (1013 aa).

Disordered stretches follow at residues 1–65 and 105–137; these read MPRS…NSDT and SYGQ…GSNT. Residues 30-65 are compositionally biased toward polar residues; the sequence is QKSNGQLNGNANGSSAPISGPSSQVDWPSSRSNSDT. 3 helical membrane passes run 158-178, 211-231, and 254-274; these read IAIL…VQFL, LGTM…FMWT, and SGKN…LHLI. Positions 339–367 are disordered; that stretch reads RRSMAKNRAPAPPRTGKRVDTEASAGSQT. Residues 596 to 782 are a coiled coil; it reads TTLKNSIVNA…REQDQAKVEA (187 aa). Residues 875 to 899 are compositionally biased toward polar residues; it reads SPLQHASSPIGPTSSRPTSPTQAPS. Disordered regions lie at residues 875 to 902 and 953 to 1013; these read SPLQ…SYLQ and DLSE…GKGN. Residues 954–965 are compositionally biased toward basic and acidic residues; sequence LSEKVVDKRRSS. The segment covering 993–1002 has biased composition (gly residues); sequence SGSGGSGSGS. Residues 1003-1013 are compositionally biased toward low complexity; it reads GSPSSATGKGN.

The protein belongs to the acrB family.

It localises to the membrane. Functionally, component of the regulatory network controlling carbon source utilization through ubiquitination and deubiquitination involving creA, creB, creC, creD and acrB. Involved in resistance to acriflavine, and required for normal growth on a range of sole carbon sources, including fructose, cellobiose, raffinose, and starch, and reduced utilization of amino acids, including GABA and beta-alanine, as sole carbon and nitrogen sources. The sequence is that of Probable ubiquitination network signaling protein acrB (acrB) from Aspergillus oryzae (strain ATCC 42149 / RIB 40) (Yellow koji mold).